Reading from the N-terminus, the 1168-residue chain is Transcription-repair-coupling factor (1168 aa).

The 162-residue stretch at 633 to 794 folds into the Helicase ATP-binding domain; sequence DMQKSRPMDR…MLGVRDLSVI (162 aa). 646-653 contributes to the ATP binding site; sequence GDVGYGKT. Residues 747-750 carry the DEEQ box motif; it reads DEEQ. Positions 808 to 969 constitute a Helicase C-terminal domain; sequence VLEQNMSFIK…GFKIAMRDLN (162 aa).

This sequence in the N-terminal section; belongs to the UvrB family. In the C-terminal section; belongs to the helicase family. RecG subfamily.

It localises to the cytoplasm. Its function is as follows. Couples transcription and DNA repair by recognizing RNA polymerase (RNAP) stalled at DNA lesions. Mediates ATP-dependent release of RNAP and its truncated transcript from the DNA, and recruitment of nucleotide excision repair machinery to the damaged site. This Staphylococcus aureus (strain MSSA476) protein is Transcription-repair-coupling factor.